Consider the following 201-residue polypeptide: Large ribosomal subunit protein uL4 (201 aa).

Residues 44-68 form a disordered region; that stretch reads KAQKTRSEVAGTTKKSKKQKGGGAR.

The protein belongs to the universal ribosomal protein uL4 family. Part of the 50S ribosomal subunit.

Its function is as follows. One of the primary rRNA binding proteins, this protein initially binds near the 5'-end of the 23S rRNA. It is important during the early stages of 50S assembly. It makes multiple contacts with different domains of the 23S rRNA in the assembled 50S subunit and ribosome. Functionally, forms part of the polypeptide exit tunnel. The sequence is that of Large ribosomal subunit protein uL4 from Xanthomonas oryzae pv. oryzae (strain MAFF 311018).